Reading from the N-terminus, the 87-residue chain is Acyl-CoA-binding protein (87 aa).

The ACB domain occupies 3–87 (LKEEFEEHAV…KVKQLLEESA (85 aa)). An acyl-CoA is bound by residues 30–34 (YGLYK), K56, and Y75.

It belongs to the ACBP family.

Binds medium- and long-chain acyl-CoA esters with very high affinity and may function as an intracellular carrier of acyl-CoA esters. This is Acyl-CoA-binding protein (ACABP) from Fritillaria agrestis (Stinkbells).